The sequence spans 456 residues: tRNA modification GTPase MnmE (456 aa).

(6S)-5-formyl-5,6,7,8-tetrahydrofolate contacts are provided by Arg-24, Glu-81, and Lys-120. The 164-residue stretch at 216–379 (GMTVVIAGRP…LRDHLKACMG (164 aa)) folds into the TrmE-type G domain. Asn-226 contacts K(+). GTP contacts are provided by residues 226-231 (NAGKSS), 245-251 (TEIAGTT), 270-273 (DTAG), and 335-338 (NKAD). Residue Ser-230 participates in Mg(2+) binding. Thr-245, Ile-247, and Thr-250 together coordinate K(+). Mg(2+) is bound at residue Thr-251. Lys-456 is a (6S)-5-formyl-5,6,7,8-tetrahydrofolate binding site.

The protein belongs to the TRAFAC class TrmE-Era-EngA-EngB-Septin-like GTPase superfamily. TrmE GTPase family. Homodimer. Heterotetramer of two MnmE and two MnmG subunits. Requires K(+) as cofactor.

Its subcellular location is the cytoplasm. Functionally, exhibits a very high intrinsic GTPase hydrolysis rate. Involved in the addition of a carboxymethylaminomethyl (cmnm) group at the wobble position (U34) of certain tRNAs, forming tRNA-cmnm(5)s(2)U34. This chain is tRNA modification GTPase MnmE, found in Pseudomonas fluorescens (strain Pf0-1).